Here is a 760-residue protein sequence, read N- to C-terminus: MVIKKGFFALSSCTLGLGLILTACGARGKFDQVDDGVIKLATSIQNKDSIAALNTIYKKYKERHPGSYPVQNFQVPGGYSGLRNDIRTRLSAKDGNNFYNIVLNYPDVVSSLATSDMQLILDNVDTKLLSKNFLSFNERIGGVRQKGIYAIPISLSTELMVLNGPVLHYILNSAKKKENGAQMIKRSGSFSTVQKGTMAIDMNDQKTKDLWQKIENAAKANGKTTSTQTSPQPKNAVSSLQLKQAAEGTSTDNSQDAENSDNEIKKTWGEYKEEGNHTLKGYTFKASVFENWNELLDFSTRVANSFPDKIKNQASKKATELQGVFGVDSVSGALFSATFAAGGGDYDKFFFNVKNGRGNFRNLLEKGSSYNNLQKVFNDYKQLISSNGLYINKGGAYSSNFLKFHQLAFSVGSSSGYHFAFAGESAKRLEFGQKAIEYPRDTYEIKAPTNSQNGNGTLLGSFTKSKSNGKEQSGQDEDNQTSETIELYKSSVPSGKEAGKNALAITNQQLISALENAAKDNKTSQPQARSLTASDQVQITQSSDKVIGYITTSNLDIDNNNTFDVGKLNGDKSTSKIIVNATLKTLNKINTLQSEEGIILPHPQKYKSTDPQAVATVQGPSIIGVHANAKENAETQKFINWFINQKETWPENSKGNKNGQNGQMTAAQYFAKSSGYVLPYSETFTKQSEDEHSTTKDAYKILKDVNDGKLVGYSDPSDFRSGKFRDTIVAAFSGAVSSKADFNKFFKGFEQQLGQEYRRG.

Residues 1 to 23 (MVIKKGFFALSSCTLGLGLILTA) form the signal peptide. Cys-24 is lipidated: N-palmitoyl cysteine. Cys-24 carries the S-diacylglycerol cysteine lipid modification. 2 disordered regions span residues 220–262 (ANGK…NSDN) and 443–482 (YEIKAPTNSQNGNGTLLGSFTKSKSNGKEQSGQDEDNQTS). 2 stretches are compositionally biased toward polar residues: residues 222–257 (GKTTSTQTSPQPKNAVSSLQLKQAAEGTSTDNSQDA) and 448–472 (PTNSQNGNGTLLGSFTKSKSNGKEQ).

It belongs to the MG185/MG260 family.

It localises to the cell membrane. This is an uncharacterized protein from Mycoplasma pneumoniae (strain ATCC 29342 / M129 / Subtype 1) (Mycoplasmoides pneumoniae).